Here is a 520-residue protein sequence, read N- to C-terminus: Ribonuclease Y (520 aa).

A helical membrane pass occupies residues 3 to 23; that stretch reads IEIQWIGIGAAFLVGAIGGAL. In terms of domain architecture, KH spans 210–273; that stretch reads AVSVVPLPND…EVARLALERL (64 aa). Positions 336–429 constitute an HD domain; sequence VLQHSIEVAF…VQAADALSGA (94 aa).

The protein belongs to the RNase Y family.

The protein localises to the cell membrane. In terms of biological role, endoribonuclease that initiates mRNA decay. This is Ribonuclease Y from Syntrophotalea carbinolica (strain DSM 2380 / NBRC 103641 / GraBd1) (Pelobacter carbinolicus).